The following is a 64-amino-acid chain: Large ribosomal subunit protein bL35 (64 aa).

Over residues 1–14 the composition is skewed to basic residues; the sequence is MKNKTHKGTAKRVK. The interval 1-29 is disordered; it reads MKNKTHKGTAKRVKVTGSGKLVREQANRR.

Belongs to the bacterial ribosomal protein bL35 family.

This Corynebacterium glutamicum (strain R) protein is Large ribosomal subunit protein bL35.